We begin with the raw amino-acid sequence, 239 residues long: Fatty acid metabolism regulator protein (239 aa).

One can recognise an HTH gntR-type domain in the interval 6-74; it reads QSPAGFAEEY…HGKPTKVNNF (69 aa). Positions 34-53 form a DNA-binding region, H-T-H motif; that stretch reads ERELSELIGVTRTTLREVLQ.

In terms of assembly, homodimer.

The protein localises to the cytoplasm. Multifunctional regulator of fatty acid metabolism. The chain is Fatty acid metabolism regulator protein from Serratia proteamaculans (strain 568).